The sequence spans 435 residues: Zinc finger CCCH domain-containing protein 16 (435 aa).

The C3H1-type zinc-finger motif lies at 1 to 27 (MRKELCRNFQRGSCRYGENCRFLHPQQ). Positions 2–88 (RKELCRNFQR…ASTPTGGGAA (87 aa)) are 6 X 2 AA repeats of F-G. Disordered stretches follow at residues 25-105 (PQQA…DHKC) and 205-374 (TPSI…SQNN). Repeat copies occupy residues 34–35 (FG) and 36–37 (FG). A compositionally biased stretch (low complexity) spans 39–51 (QNQQQQQQQQQQN). Repeat copies occupy residues 56 to 57 (FG) and 58 to 59 (FG). Over residues 63 to 77 (GGSSRPNQFQNTWSR) the composition is skewed to polar residues. Residues 78-99 (TASTPTGGGAAASTQQTGKQTQ) show a composition bias toward low complexity. Composition is skewed to polar residues over residues 205 to 320 (TPSI…VNTP) and 328 to 339 (SGFQTNPSTTFK). 2 tandem repeats follow at residues 343–344 (FG) and 359–360 (FG). Polar residues predominate over residues 351–374 (TTPQNNNIFGQSTPTPATNTSQNN).

In terms of assembly, part of the nuclear pore complex (NPC). The NPC has an eight-fold symmetrical structure comprising a central transport channel and two rings, the cytoplasmic and nuclear rings, to which eight filaments are attached. The cytoplasmic filaments have loose ends, while the nuclear filaments are joined in a distal ring, forming a nuclear basket. NPCs are highly dynamic in configuration and composition, and can be devided in 3 subcomplexes, the NUP62 subcomplex, the NUP107-160 subcomplex and the NUP93 subcomplex, containing approximately 30 different nucleoporin proteins.

It is found in the nucleus envelope. It localises to the nucleus. The protein resides in the nuclear pore complex. The sequence is that of Zinc finger CCCH domain-containing protein 16 from Arabidopsis thaliana (Mouse-ear cress).